The chain runs to 61 residues: ATP synthase subunit J, mitochondrial (61 aa).

A helical membrane pass occupies residues leucine 13–alanine 32.

In terms of assembly, F-type ATP synthases have 2 components, the catalytic core F(1) and the membrane-embedded component F(0), linked together by a central stalk and a peripheral stalk. The central stalk, also called rotor shaft, is often seen as part of F(1). The peripheral stalk is seen as part of F(0). F(0) contains the membrane channel next to the rotor. F-type ATP synthases form dimers but each monomer functions independently in ATP generation. The dimer consists of 18 different polypeptides: ATP1 (subunit alpha, part of F(1), 3 molecules per monomer), ATP2 (subunit beta, part of F(1), 3 molecules per monomer), ATP3 (subunit gamma, part of the central stalk), ATP4 (subunit b, part of the peripheral stalk), ATP5/OSCP (subunit 5/OSCP, part of the peripheral stalk), ATP6 (subunit a, part of the peripheral stalk), ATP7 (subunit d, part of the peripheral stalk), ATP8 (subunit 8, part of the peripheral stalk), OLI1 (subunit c, part of the rotor, 10 molecules per monomer), ATP14 (subunit h, part of the peripheral stalk), ATP15 (subunit epsilon, part of the central stalk), ATP16 (subunit delta, part of the central stalk), ATP17 (subunit f, part of the peripheral stalk), ATP18 (subunit i/j, part of the peripheral stalk). Dimer-specific subunits are ATP19 (subunit k, at interface between monomers), ATP20 (subunit g, at interface between monomers), TIM11 (subunit e, at interface between monomers). Also contains subunit L.

It localises to the mitochondrion inner membrane. Functionally, mitochondrial membrane ATP synthase (F(1)F(0) ATP synthase or Complex V) produces ATP from ADP in the presence of a proton gradient across the membrane which is generated by electron transport complexes of the respiratory chain. F-type ATP synthases consist of two structural domains, F(1) - containing the extramembraneous catalytic core, and F(0) - containing the membrane proton channel, linked together by a central stalk and a peripheral stalk. During catalysis, ATP synthesis in the catalytic domain of F(1) is coupled via a rotary mechanism of the central stalk subunits to proton translocation. Part of the complex F(0) domain. Minor subunit located with subunit a/ATP6 in the membrane. In Pichia angusta (Yeast), this protein is ATP synthase subunit J, mitochondrial.